The sequence spans 305 residues: Ribosomal RNA small subunit methyltransferase H (305 aa).

S-adenosyl-L-methionine contacts are provided by residues 33–35 (GGH), aspartate 52, aspartate 97, and glutamine 104.

This sequence belongs to the methyltransferase superfamily. RsmH family.

It localises to the cytoplasm. The catalysed reaction is cytidine(1402) in 16S rRNA + S-adenosyl-L-methionine = N(4)-methylcytidine(1402) in 16S rRNA + S-adenosyl-L-homocysteine + H(+). Its function is as follows. Specifically methylates the N4 position of cytidine in position 1402 (C1402) of 16S rRNA. This is Ribosomal RNA small subunit methyltransferase H from Campylobacter lari (strain RM2100 / D67 / ATCC BAA-1060).